Here is a 258-residue protein sequence, read N- to C-terminus: Thrombin-like enzyme CPI-enzyme 2 (258 aa).

The signal sequence occupies residues 1–18 (MVLIRVLANLLILQLSYA). The propeptide occupies 19–24 (QKSSEL). A Peptidase S1 domain is found at 25-249 (VIGGDECNIN…YTDWIENIIA (225 aa)). 6 cysteine pairs are disulfide-bonded: Cys31/Cys163, Cys50/Cys66, Cys98/Cys256, Cys142/Cys210, Cys174/Cys189, and Cys200/Cys225. An N-linked (GlcNAc...) asparagine glycan is attached at Asn44. Catalysis depends on His65, which acts as the Charge relay system. N-linked (GlcNAc...) asparagine glycans are attached at residues Asn79 and Asn103. Asp110 (charge relay system) is an active-site residue. Asn121 is a glycosylation site (N-linked (GlcNAc...) asparagine). The Charge relay system role is filled by Ser204.

It belongs to the peptidase S1 family. Snake venom subfamily. Monomer. Post-translationally, N-glycosylated. In terms of tissue distribution, expressed by the venom gland.

It is found in the secreted. Its function is as follows. Thrombin-like snake venom serine protease that cleaves fibrinogen beta (FGB) releasing fibrinopeptide B. Promotes capillary permeability-increasing activity through the release of peptides from the beta-chain of fibrinogen. The polypeptide is Thrombin-like enzyme CPI-enzyme 2 (Gloydius ussuriensis (Ussuri mamushi)).